Here is a 61-residue protein sequence, read N- to C-terminus: Insect toxin LqhIT5 (61 aa).

The LCN-type CS-alpha/beta domain occupies 1–61; the sequence is DGYIRGGDGC…EWKYETNTCG (61 aa). 4 cysteine pairs are disulfide-bonded: cysteine 10–cysteine 60, cysteine 14–cysteine 35, cysteine 21–cysteine 42, and cysteine 25–cysteine 44.

Belongs to the long (4 C-C) scorpion toxin superfamily. Sodium channel inhibitor family. Beta subfamily. As to expression, expressed by the venom gland.

It is found in the secreted. In terms of biological role, excitatory insect beta-toxins induce a spastic paralysis. They bind voltage-independently at site-4 of sodium channels (Nav) and shift the voltage of activation toward more negative potentials thereby affecting sodium channel activation and promoting spontaneous and repetitive firing. This toxin is active only on insects. It operates by inducing a fast contraction paralysis without depressant activity. It is more similar to the excitatory toxins in its mode of action and the depressant toxins in its primary structure. This Leiurus hebraeus (Hebrew deathstalker scorpion) protein is Insect toxin LqhIT5.